A 192-amino-acid polypeptide reads, in one-letter code: UPF0301 protein Rru_A3059 (192 aa).

Belongs to the UPF0301 (AlgH) family.

This is UPF0301 protein Rru_A3059 from Rhodospirillum rubrum (strain ATCC 11170 / ATH 1.1.1 / DSM 467 / LMG 4362 / NCIMB 8255 / S1).